Consider the following 111-residue polypeptide: uncharacterized protein (111 aa).

The first 18 residues, 1–18 (MGKSMEEGIFVKVFPSKA), serve as a signal peptide directing secretion.

This is an uncharacterized protein from Acidianus convivator (ATV).